Reading from the N-terminus, the 370-residue chain is MLISIAFLLVLYLLNYSSFRMLKSFLTLKKISQYAYLWFFILLSIGEAAFVFYRNIMPSHLFVLTSACSFVSFIIFILSLSFYGFSYSIEKIDFLHSRRKSLKNFLKLGFYLALLGYFWRGFYEGLARPKIKETPIYLDKLDKELKIILLTDMHVGSLLQKDFVDYIVEEVNQKEVDMVLIGGDLVDESIEKVKSFLLPLNNLKSTHGTFYVPGNHEYYHGIEPILSFLDTLNLTILGNECVHLGGINLCGVYDYFARKRQNFAPDIDKALKKRNESKPTILLAHQPKQIRSLKESHSVDLVLSGHTHAGQIFPFSLLVKLAQTYLHGLYKHSPTTQIYVSSGAGYWGIPLRFLAPSEIAYLRLLPKNQA.

Residues Asp152, His154, Asp184, Asn215, His306, and His308 each coordinate a divalent metal cation.

Belongs to the metallophosphoesterase superfamily. A divalent metal cation serves as cofactor.

This is an uncharacterized protein from Helicobacter pylori (strain ATCC 700392 / 26695) (Campylobacter pylori).